The following is a 359-amino-acid chain: Probable mannitol dehydrogenase (359 aa).

Residues Cys50, His72, Cys103, Cys106, Cys109, Cys117, and Cys165 each coordinate Zn(2+).

The protein belongs to the zinc-containing alcohol dehydrogenase family. It depends on Zn(2+) as a cofactor.

The enzyme catalyses D-mannitol + NAD(+) = D-mannose + NADH + H(+). Oxidizes mannitol to mannose. Provides the initial step by which translocated mannitol is committed to central metabolism and, by regulating mannitol pool size, is important in regulating salt tolerance at the cellular level. The polypeptide is Probable mannitol dehydrogenase (CAD1) (Medicago sativa (Alfalfa)).